Consider the following 147-residue polypeptide: Small ribosomal subunit protein uS12 (147 aa).

This sequence belongs to the universal ribosomal protein uS12 family. As to quaternary structure, part of the 30S ribosomal subunit.

Functionally, with S4 and S5 plays an important role in translational accuracy. Located at the interface of the 30S and 50S subunits. This chain is Small ribosomal subunit protein uS12, found in Hyperthermus butylicus (strain DSM 5456 / JCM 9403 / PLM1-5).